Consider the following 589-residue polypeptide: Type I restriction enzyme EcoAI specificity subunit (589 aa).

This sequence belongs to the type-I restriction system S methylase family. As to quaternary structure, the type I restriction/modification system is composed of three polypeptides R, M and S. The restriction enzyme has stoichiometry R(2)M(2)S(1) while the methyltransferase is M(2)S(1).

The specificity (S) subunit of a type I restriction enzyme; this subunit dictates DNA sequence specificity. The M and S subunits together form a methyltransferase (MTase) that methylates A-2 on the top strand and A-3 on the bottom strand of the sequence 5'-GAGN(7)GTCA-3'. In the presence of the R subunit the complex can also act as an endonuclease, binding to the same target sequence but cutting the DNA some distance from this site. Whether the DNA is cut or modified depends on the methylation state of the target sequence. When the target site is unmodified, the DNA is cut. When the target site is hemimethylated, the complex acts as a maintenance MTase modifying the DNA so that both strands become methylated. After locating a non-methylated recognition site, the enzyme complex serves as a molecular motor that translocates DNA in an ATP-dependent manner until a collision occurs that triggers cleavage. In Escherichia coli, this protein is Type I restriction enzyme EcoAI specificity subunit.